The primary structure comprises 1191 residues: Probable inositol polyphosphate 5-phosphatase C9G1.10c (1191 aa).

Polar residues-rich tracts occupy residues 1–10, 72–101, 114–135, 151–161, and 181–193; these read MASRQGFSNV, QVSS…NPSN, SDSS…SFVS, SFQSSVQSTKG, and NFSS…SPIS. The tract at residues 1–193 is disordered; that stretch reads MASRQGFSNV…SKAGSSSPIS (193 aa). S195 carries the phosphoserine modification. 3 disordered regions span residues 205–281, 294–334, and 355–425; these read SQSP…PQPV, SQQL…DASL, and IPEK…SSSS. The span at 268-280 shows a compositional bias: pro residues; the sequence is TPPPIPSPRPPQP. Residues 302–311 are compositionally biased toward basic residues; sequence SPRKPPKPPL. Polar residues-rich tracts occupy residues 316-334, 367-382, and 400-413; these read TQRS…DASL, HTLS…SENL, and LATN…VSTE. A compositionally biased stretch (low complexity) spans 414 to 425; it reads QSDPSVAASSSS.

Belongs to the inositol 1,4,5-trisphosphate 5-phosphatase family.

Its subcellular location is the cytoplasm. The polypeptide is Probable inositol polyphosphate 5-phosphatase C9G1.10c (Schizosaccharomyces pombe (strain 972 / ATCC 24843) (Fission yeast)).